We begin with the raw amino-acid sequence, 370 residues long: Pyruvate dehydrogenase E1 component subunit alpha (370 aa).

In terms of assembly, heterodimer of an alpha and a beta chain. The cofactor is thiamine diphosphate.

The catalysed reaction is N(6)-[(R)-lipoyl]-L-lysyl-[protein] + pyruvate + H(+) = N(6)-[(R)-S(8)-acetyldihydrolipoyl]-L-lysyl-[protein] + CO2. Functionally, the pyruvate dehydrogenase complex catalyzes the overall conversion of pyruvate to acetyl-CoA and CO(2). It contains multiple copies of three enzymatic components: pyruvate dehydrogenase (E1), dihydrolipoamide acetyltransferase (E2) and lipoamide dehydrogenase (E3). The sequence is that of Pyruvate dehydrogenase E1 component subunit alpha (pdhA) from Staphylococcus aureus (strain MRSA252).